The following is a 390-amino-acid chain: Galactokinase (390 aa).

33–36 (EHTD) lines the substrate pocket. ATP-binding positions include S67 and 124-130 (GAGLSSS). Residues S130 and E162 each contribute to the Mg(2+) site. D174 serves as the catalytic Proton acceptor. Y224 is a binding site for substrate.

The protein belongs to the GHMP kinase family. GalK subfamily.

The protein resides in the cytoplasm. The catalysed reaction is alpha-D-galactose + ATP = alpha-D-galactose 1-phosphate + ADP + H(+). Its pathway is carbohydrate metabolism; galactose metabolism. In terms of biological role, catalyzes the transfer of the gamma-phosphate of ATP to D-galactose to form alpha-D-galactose-1-phosphate (Gal-1-P). The sequence is that of Galactokinase from Exiguobacterium sibiricum (strain DSM 17290 / CCUG 55495 / CIP 109462 / JCM 13490 / 255-15).